Here is an 89-residue protein sequence, read N- to C-terminus: Small ribosomal subunit protein uS14 (89 aa).

This sequence belongs to the universal ribosomal protein uS14 family. Part of the 30S ribosomal subunit. Contacts proteins S3 and S10.

In terms of biological role, binds 16S rRNA, required for the assembly of 30S particles and may also be responsible for determining the conformation of the 16S rRNA at the A site. This chain is Small ribosomal subunit protein uS14, found in Chlorobium phaeobacteroides (strain BS1).